The chain runs to 312 residues: MPNSHSTQSTPVKNFQNKFLVLTSTPKDFLLLMKPSVMLLAVFTAITGLFIAPNKIHPLLSSIAILCISTGAGAAGAINMWYDADIDSIMKRTRNRPTVTGKIPPSTALTFGIILAFFSVLVMAICVNYISSILLLISISFYIIVYTMWLKRRTAQNIVIGGAAGALPPVIGYSAVTNSIDTTCLMLFLIIFLWTPAHFWTLSLYYTNDYKLANVPILPLVKGINYTKYSILAYTFLTVISASLPYFTDIAGLLYLICSTISGIIFLCYASMLFNDRNNILARKMFKYSIIYLFNIFLYLIIEHCIKHFNIS.

Helical transmembrane passes span 31–51 (LLMK…GLFI), 58–78 (PLLS…AGAI), 107–127 (TALT…AICV), 130–150 (ISSI…TMWL), 157–177 (NIVI…SAVT), 184–204 (CLML…TLSL), 229–249 (YSIL…YFTD), 250–270 (IAGL…LCYA), and 286–306 (FKYS…EHCI).

It belongs to the UbiA prenyltransferase family. Protoheme IX farnesyltransferase subfamily.

The protein resides in the cell inner membrane. It catalyses the reaction heme b + (2E,6E)-farnesyl diphosphate + H2O = Fe(II)-heme o + diphosphate. It functions in the pathway porphyrin-containing compound metabolism; heme O biosynthesis; heme O from protoheme: step 1/1. Its function is as follows. Converts heme B (protoheme IX) to heme O by substitution of the vinyl group on carbon 2 of heme B porphyrin ring with a hydroxyethyl farnesyl side group. The sequence is that of Protoheme IX farnesyltransferase from Orientia tsutsugamushi (strain Ikeda) (Rickettsia tsutsugamushi).